Reading from the N-terminus, the 197-residue chain is Transposon Tn552 resolvase (197 aa).

Residues 1–136 form the Resolvase/invertase-type recombinase catalytic domain; sequence MKIGYARVST…AGRIAARARG (136 aa). The active-site O-(5'-phospho-DNA)-serine intermediate is Ser-9. Positions 163 to 182 form a DNA-binding region, H-T-H motif; that stretch reads IKTIAEQWQVSRTTIYRYLN.

It belongs to the site-specific recombinase resolvase family.

Its function is as follows. Resolvase catalyzes the resolution (a site-specific recombination) of the cointegrated replicon to yield the final transposition products. This is Transposon Tn552 resolvase (tnpR) from Staphylococcus aureus.